We begin with the raw amino-acid sequence, 343 residues long: Heat-inducible transcription repressor HrcA (343 aa).

Belongs to the HrcA family.

Negative regulator of class I heat shock genes (grpE-dnaK-dnaJ and groELS operons). Prevents heat-shock induction of these operons. This Caldanaerobacter subterraneus subsp. tengcongensis (strain DSM 15242 / JCM 11007 / NBRC 100824 / MB4) (Thermoanaerobacter tengcongensis) protein is Heat-inducible transcription repressor HrcA.